The following is a 273-amino-acid chain: MLKLLLLTLPLLSSLVHAAPSLAMPREGIVGGQEASGNKWPWQVSLRVNDTYWMHFCGGSLIHPQWVLTAAHCVGPNKADPNKLRVQLRKQYLYYHDHLLTVSQIISHPDFYIAQDGADIALLKLTNPVNITSNVHTVSLPPASETFPSGTLCWVTGWGNINNDVSLPPPFPLEEVQVPIVENRLCDLKYHKGLNTGDNVHIVRDDMLCAGNEGHDSCQGDSGGPLVCKVEDTWLQAGVVSWGEGCAQPNRPGIYTRVTYYLDWIYRYVPKYF.

The signal sequence occupies residues 1–18 (MLKLLLLTLPLLSSLVHA). Residues 19 to 28 (APSLAMPREG) constitute a propeptide, activation peptide. A Peptidase S1 domain is found at 29–270 (IVGGQEASGN…YLDWIYRYVP (242 aa)). An N-linked (GlcNAc...) asparagine glycan is attached at N49. C57 and C73 form a disulfide bridge. Residues H72 and D119 each act as charge relay system in the active site. Disulfide bonds link C153–C228, C186–C209, and C218–C246. The active-site Charge relay system is S222.

The protein belongs to the peptidase S1 family. Tryptase subfamily. In terms of assembly, homotetramer. Post-translationally, glycosylated. As to expression, mast cells.

It is found in the secreted. The enzyme catalyses Preferential cleavage: Arg-|-Xaa, Lys-|-Xaa, but with more restricted specificity than trypsin.. Functionally, tryptase is the major neutral protease present in mast cells and is secreted upon the coupled activation-degranulation response of this cell type. May play a role in innate immunity. This chain is Tryptase (Tpsab1), found in Rattus norvegicus (Rat).